The primary structure comprises 564 residues: Dihydroxy-acid dehydratase (564 aa).

Asp-80 lines the Mg(2+) pocket. Cys-121 contributes to the [2Fe-2S] cluster binding site. Positions 122 and 123 each coordinate Mg(2+). Lys-123 is modified (N6-carboxylysine). Cys-194 provides a ligand contact to [2Fe-2S] cluster. Glu-447 is a Mg(2+) binding site. Ser-473 acts as the Proton acceptor in catalysis.

The protein belongs to the IlvD/Edd family. In terms of assembly, homodimer. [2Fe-2S] cluster serves as cofactor. Mg(2+) is required as a cofactor.

The catalysed reaction is (2R)-2,3-dihydroxy-3-methylbutanoate = 3-methyl-2-oxobutanoate + H2O. The enzyme catalyses (2R,3R)-2,3-dihydroxy-3-methylpentanoate = (S)-3-methyl-2-oxopentanoate + H2O. The protein operates within amino-acid biosynthesis; L-isoleucine biosynthesis; L-isoleucine from 2-oxobutanoate: step 3/4. Its pathway is amino-acid biosynthesis; L-valine biosynthesis; L-valine from pyruvate: step 3/4. Functions in the biosynthesis of branched-chain amino acids. Catalyzes the dehydration of (2R,3R)-2,3-dihydroxy-3-methylpentanoate (2,3-dihydroxy-3-methylvalerate) into 2-oxo-3-methylpentanoate (2-oxo-3-methylvalerate) and of (2R)-2,3-dihydroxy-3-methylbutanoate (2,3-dihydroxyisovalerate) into 2-oxo-3-methylbutanoate (2-oxoisovalerate), the penultimate precursor to L-isoleucine and L-valine, respectively. The chain is Dihydroxy-acid dehydratase from Listeria monocytogenes serotype 4b (strain CLIP80459).